A 347-amino-acid polypeptide reads, in one-letter code: A-type ATP synthase subunit C (347 aa).

The protein belongs to the V-ATPase V0D/AC39 subunit family. Has multiple subunits with at least A(3), B(3), C, D, E, F, H, I and proteolipid K(x).

The protein localises to the cell membrane. In terms of biological role, component of the A-type ATP synthase that produces ATP from ADP in the presence of a proton gradient across the membrane. This Haloquadratum walsbyi (strain DSM 16790 / HBSQ001) protein is A-type ATP synthase subunit C.